Consider the following 754-residue polypeptide: ATP-dependent zinc metalloprotease FtsH (754 aa).

Residues 1 to 9 (MKQRMKKPS) lie on the Cytoplasmic side of the membrane. The chain crosses the membrane as a helical span at residues 10 to 30 (LGTFILILILIGILAYVLWQF). Over 31-186 (LSPKLGYKSL…FDRPRGNFLS (156 aa)) the chain is Extracellular. The chain crosses the membrane as a helical span at residues 187–207 (SFIVPYIPFLLISLFGFWLFF). At 208-754 (RLSQNSQAGG…ESKIDSSKEQ (547 aa)) the chain is on the cytoplasmic side. 277 to 284 (GPPGTGKT) provides a ligand contact to ATP. His-499 serves as a coordination point for Zn(2+). The active site involves Glu-500. 2 residues coordinate Zn(2+): His-503 and Asp-577. A disordered region spans residues 713–754 (QEKSYENEDQNQNSLEAINYNIDDQDDDKNDSESKIDSSKEQ). Over residues 743-754 (DSESKIDSSKEQ) the composition is skewed to basic and acidic residues.

It in the central section; belongs to the AAA ATPase family. This sequence in the C-terminal section; belongs to the peptidase M41 family. Homohexamer. It depends on Zn(2+) as a cofactor.

The protein resides in the cell membrane. Its function is as follows. Acts as a processive, ATP-dependent zinc metallopeptidase for both cytoplasmic and membrane proteins. Plays a role in the quality control of integral membrane proteins. The polypeptide is ATP-dependent zinc metalloprotease FtsH (Mesomycoplasma conjunctivae (strain ATCC 25834 / NCTC 10147 / HRC/581) (Mycoplasma conjunctivae)).